A 400-amino-acid polypeptide reads, in one-letter code: tRNA-specific 2-thiouridylase MnmA (400 aa).

Residues 19 to 26 and Leu45 contribute to the ATP site; that span reads AMSGGVDS. The Nucleophile role is filled by Cys113. An intrachain disulfide couples Cys113 to Cys210. Position 137 (Gly137) interacts with ATP. The tract at residues 160–162 is interaction with tRNA; it reads RDQ. Cys210 serves as the catalytic Cysteine persulfide intermediate.

This sequence belongs to the MnmA/TRMU family.

The protein resides in the cytoplasm. It catalyses the reaction S-sulfanyl-L-cysteinyl-[protein] + uridine(34) in tRNA + AH2 + ATP = 2-thiouridine(34) in tRNA + L-cysteinyl-[protein] + A + AMP + diphosphate + H(+). Catalyzes the 2-thiolation of uridine at the wobble position (U34) of tRNA, leading to the formation of s(2)U34. In Nitrobacter winogradskyi (strain ATCC 25391 / DSM 10237 / CIP 104748 / NCIMB 11846 / Nb-255), this protein is tRNA-specific 2-thiouridylase MnmA.